A 236-amino-acid polypeptide reads, in one-letter code: uncharacterized protein (236 aa).

The ABC transporter domain occupies 4–225 (LLEASIEQAG…TGLEGQSLLD (222 aa)). 38-45 (GANGAGKS) serves as a coordination point for ATP.

Belongs to the ABC transporter superfamily.

This is an uncharacterized protein from Bacillus subtilis (strain 168).